Reading from the N-terminus, the 127-residue chain is 3-aminoacrylate deaminase RutC (127 aa).

The protein belongs to the RutC family.

The catalysed reaction is (Z)-3-aminoacrylate + H2O + H(+) = 3-oxopropanoate + NH4(+). Involved in pyrimidine catabolism. Catalyzes the deamination of 3-aminoacrylate to malonic semialdehyde, a reaction that can also occur spontaneously. RutC may facilitate the reaction and modulate the metabolic fitness, rather than catalyzing essential functions. This Pseudomonas syringae pv. syringae (strain B728a) protein is 3-aminoacrylate deaminase RutC.